The primary structure comprises 124 residues: Small ribosomal subunit protein uS13 (124 aa).

The span at 103–117 shows a compositional bias: basic residues; it reads KCNARTRKGPRKTVA. Residues 103–124 are disordered; it reads KCNARTRKGPRKTVANKKIETK.

This sequence belongs to the universal ribosomal protein uS13 family. Part of the 30S ribosomal subunit. Forms a loose heterodimer with protein S19. Forms two bridges to the 50S subunit in the 70S ribosome.

In terms of biological role, located at the top of the head of the 30S subunit, it contacts several helices of the 16S rRNA. In the 70S ribosome it contacts the 23S rRNA (bridge B1a) and protein L5 of the 50S subunit (bridge B1b), connecting the 2 subunits; these bridges are implicated in subunit movement. Contacts the tRNAs in the A and P-sites. The polypeptide is Small ribosomal subunit protein uS13 (Malacoplasma penetrans (strain HF-2) (Mycoplasma penetrans)).